The following is a 436-amino-acid chain: APO protein 1, chloroplastic (436 aa).

The N-terminal 47 residues, 1 to 47 (MLLVSPACRGVYLQTIDPKPIDFSARASYALCFQIPTSIPKRECLMR), are a transit peptide targeting the chloroplast. 2 APO domains span residues 155–240 (ACSE…EIPE) and 329–414 (ACGY…RVPQ).

It belongs to the APO family. Expressed at low level. Expressed at higher level in leaves. Expressed at lower level in roots, stems, siliques and flowers.

The protein localises to the plastid. It localises to the chloroplast. Its function is as follows. Involved in the stable assembly of several 4Fe-4S cluster-containing complexes of chloroplasts. May participate in 4Fe-4S cofactor incorporation into psaA and/or psaB during translation. The sequence is that of APO protein 1, chloroplastic (APO1) from Arabidopsis thaliana (Mouse-ear cress).